The chain runs to 117 residues: UPF0295 protein RBAM_008830 (117 aa).

The next 2 helical transmembrane spans lie at 13 to 33 and 41 to 61; these read TFAL…LFFK and LFMI…FWIG.

The protein belongs to the UPF0295 family.

Its subcellular location is the cell membrane. This Bacillus velezensis (strain DSM 23117 / BGSC 10A6 / LMG 26770 / FZB42) (Bacillus amyloliquefaciens subsp. plantarum) protein is UPF0295 protein RBAM_008830.